We begin with the raw amino-acid sequence, 583 residues long: Trehalase (583 aa).

The N-terminal stretch at 1–23 (MPGRTWELCLLLLLGLGLGSQEA) is a signal peptide. Asparagine 78 is a glycosylation site (N-linked (GlcNAc...) asparagine). Residues arginine 168, 175–176 (WD), asparagine 212, and 221–223 (RSQ) each bind substrate. Residues asparagine 239 and asparagine 261 are each glycosylated (N-linked (GlcNAc...) asparagine). Substrate is bound by residues 286-288 (RPE) and glycine 319. Residue aspartate 321 is the Proton donor/acceptor of the active site. A glycan (N-linked (GlcNAc...) asparagine) is linked at asparagine 369. The active-site Proton donor/acceptor is the glutamate 514. Glutamate 529 serves as a coordination point for substrate. The GPI-anchor amidated serine moiety is linked to residue serine 556. The propeptide at 557–583 (GAKLAFLEPHCLAATLLPSLLLSLLPW) is removed in mature form.

The protein belongs to the glycosyl hydrolase 37 family. Homodimer; disulfide-linked. As to expression, expressed in kidney, liver and small intestine. Also more weakly expressed in pancreas.

The protein resides in the cell membrane. The enzyme catalyses alpha,alpha-trehalose + H2O = alpha-D-glucose + beta-D-glucose. Functionally, intestinal trehalase is probably involved in the hydrolysis of ingested trehalose. This is Trehalase from Homo sapiens (Human).